A 193-amino-acid chain; its full sequence is Potassium-transporting ATPase KdpC subunit (193 aa).

Residues 9–29 form a helical membrane-spanning segment; sequence VLMTVVTTVLLGLVYPLLITG.

This sequence belongs to the KdpC family. As to quaternary structure, the system is composed of three essential subunits: KdpA, KdpB and KdpC.

It localises to the cell inner membrane. Functionally, part of the high-affinity ATP-driven potassium transport (or Kdp) system, which catalyzes the hydrolysis of ATP coupled with the electrogenic transport of potassium into the cytoplasm. This subunit acts as a catalytic chaperone that increases the ATP-binding affinity of the ATP-hydrolyzing subunit KdpB by the formation of a transient KdpB/KdpC/ATP ternary complex. The chain is Potassium-transporting ATPase KdpC subunit from Koribacter versatilis (strain Ellin345).